A 257-amino-acid polypeptide reads, in one-letter code: A-factor type gamma-butyrolactone 1'-reductase (1S-forming) (257 aa).

Tyr161 serves as the catalytic Proton acceptor.

The protein belongs to the short-chain dehydrogenases/reductases (SDR) family. Homodimer.

The enzyme catalyses a (3R,4R)-3-[(1S)-1-hydroxyalkyl]-4-(hydroxymethyl)oxolan-2-one + NADP(+) = a (3R,4R)-3-alkanoyl-4-(hydroxymethyl)oxolan-2-one + NADPH + H(+). Functionally, involved in the biosynthesis of virginiae butanolide (VB), which regulates the production of antibiotic virginiamycin. Catalyzes the reduction of 6-dehydro-VB-A to VB-A, the last catalytic step in VB biosynthesis. In vitro, can use various synthetic A-factor-type analogs. The polypeptide is A-factor type gamma-butyrolactone 1'-reductase (1S-forming) (Streptomyces virginiae (Streptomyces cinnamonensis)).